The following is a 317-amino-acid chain: Methionyl-tRNA formyltransferase (317 aa).

Position 112–115 (112–115 (SLLP)) interacts with (6S)-5,6,7,8-tetrahydrofolate.

It belongs to the Fmt family.

It catalyses the reaction L-methionyl-tRNA(fMet) + (6R)-10-formyltetrahydrofolate = N-formyl-L-methionyl-tRNA(fMet) + (6S)-5,6,7,8-tetrahydrofolate + H(+). Attaches a formyl group to the free amino group of methionyl-tRNA(fMet). The formyl group appears to play a dual role in the initiator identity of N-formylmethionyl-tRNA by promoting its recognition by IF2 and preventing the misappropriation of this tRNA by the elongation apparatus. This is Methionyl-tRNA formyltransferase from Histophilus somni (strain 2336) (Haemophilus somnus).